The sequence spans 277 residues: NADPH-dependent 7-cyano-7-deazaguanine reductase (277 aa).

Residue 86–88 (IES) coordinates substrate. Residue 88–89 (SK) coordinates NADPH. C185 serves as the catalytic Thioimide intermediate. D192 functions as the Proton donor in the catalytic mechanism. Position 224–225 (224–225 (HE)) interacts with substrate. 253–254 (RG) lines the NADPH pocket.

This sequence belongs to the GTP cyclohydrolase I family. QueF type 2 subfamily. In terms of assembly, homodimer.

The protein resides in the cytoplasm. It catalyses the reaction 7-aminomethyl-7-carbaguanine + 2 NADP(+) = 7-cyano-7-deazaguanine + 2 NADPH + 3 H(+). It participates in tRNA modification; tRNA-queuosine biosynthesis. Catalyzes the NADPH-dependent reduction of 7-cyano-7-deazaguanine (preQ0) to 7-aminomethyl-7-deazaguanine (preQ1). The protein is NADPH-dependent 7-cyano-7-deazaguanine reductase of Hydrogenovibrio crunogenus (strain DSM 25203 / XCL-2) (Thiomicrospira crunogena).